The following is a 123-amino-acid chain: uncharacterized protein (123 aa).

Basic and acidic residues predominate over residues 31–57 (KLRTEAKKSKDKERTKEKEKHESLAKE). A disordered region spans residues 31–58 (KLRTEAKKSKDKERTKEKEKHESLAKEK). A helical membrane pass occupies residues 91 to 111 (IIIFLLILLVSGLMVGIFFGI).

It is found in the membrane. This is an uncharacterized protein from Mycoplasma genitalium (strain ATCC 33530 / DSM 19775 / NCTC 10195 / G37) (Mycoplasmoides genitalium).